The sequence spans 945 residues: Netrin receptor UNC5B (945 aa).

The signal sequence occupies residues 1 to 26 (MRARSGVRSALLLALLLCWDPTPSLA). Residues 27-377 (GVDSAGQVLP…LETSGDVALY (351 aa)) lie on the Extracellular side of the membrane. In terms of domain architecture, Ig-like spans 48–145 (PYFLLEPQDA…SGTTKSRRAY (98 aa)). 9 cysteine pairs are disulfide-bonded: C69–C130, C81–C128, C174–C225, C258–C295, C262–C299, C273–C285, C314–C348, C318–C353, and C326–C338. Residues 153–242 (KNFDQEPLAK…KRRSTTATVI (90 aa)) enclose the Ig-like C2-type domain. N222 is a glycosylation site (N-linked (GlcNAc...) asparagine). TSP type-1 domains lie at 246–300 (NGGW…TVCP) and 302–354 (DGAW…GLCV). The N-linked (GlcNAc...) asparagine glycan is linked to N347. Residues 378–398 (AGLVVAVFVVVAVLMAVGVIV) traverse the membrane as a helical segment. Residues 399-945 (YRRNCRDFDT…LVAMATDGDC (547 aa)) are Cytoplasmic-facing. A lipid anchor (S-palmitoyl cysteine) is attached at C403. Residues 543–686 (SSVSGTFGCL…LGTYVFMGES (144 aa)) form the ZU5 domain. Y581 is modified (phosphotyrosine). Positions 689–838 (RSAVKRLQLA…AETPAGSLDA (150 aa)) are UPA domain. An interaction with DCC region spans residues 707–725 (SLEYSLRVYCLEDTPVALK). Positions 865-943 (KICSSLDAPN…EMLVAMATDG (79 aa)) constitute a Death domain.

It belongs to the unc-5 family. In terms of assembly, interacts with the cytoplasmic part of DCC. Interacts with GNAI2 via its cytoplasmic part. Interacts (via death domain) with DAPK1 (via death domain). Interacts (via extracellular domain) with FLRT2 and FLRT3 (via extracellular domain), but has higher affinity for FLRT3. Identified in a complex with FLRT3 and ADGRL3; does not interact with ADGRL3 by itself. Post-translationally, phosphorylated on cytoplasmic tyrosine residues. Palmitoylation is required for pro-apoptotic activity, but not for location at lipid rafts. In terms of processing, proteolytically cleaved by caspases during apoptosis. The cleavage does not take place when the receptor is associated with netrin ligand. Its cleavage by caspases is required to induce apoptosis. As to expression, highly expressed in brain. Expressed in lung during late development. Expressed during early blood vessel formation, in the semicircular canal and in a dorsal to ventral gradient in the retina.

It is found in the cell membrane. Its subcellular location is the membrane raft. Receptor for netrin required for axon guidance. Mediates axon repulsion of neuronal growth cones in the developing nervous system upon ligand binding. Axon repulsion in growth cones may be caused by its association with DCC that may trigger signaling for repulsion. Functions as a netrin receptor that negatively regulates vascular branching during angiogenesis. Mediates retraction of tip cell filopodia on endothelial growth cones in response to netrin. It also acts as a dependence receptor required for apoptosis induction when not associated with netrin ligand. Mediates apoptosis by activating DAPK1. In the absence of NTN1, activates DAPK1 by reducing its autoinhibitory phosphorylation at Ser-308 thereby increasing its catalytic activity. In Mus musculus (Mouse), this protein is Netrin receptor UNC5B (Unc5b).